We begin with the raw amino-acid sequence, 178 residues long: MSRIGNKVIVLPAGVEISNKDNVVTVKGPKGELTREFSKDIEIRVEGTEVTLHRPNDSKEMKTIHGTTRALLNNMVVGVSEGFKKELEMRGVGYRAQLQGKKLVLSVGKSHPDEVEAPEGITFELPNPTTIVVSGISKEVVGQTAAYVRSLRAPEPYKGKGIRYVGEFVRRKEGKTGK.

The protein belongs to the universal ribosomal protein uL6 family. As to quaternary structure, part of the 50S ribosomal subunit.

In terms of biological role, this protein binds to the 23S rRNA, and is important in its secondary structure. It is located near the subunit interface in the base of the L7/L12 stalk, and near the tRNA binding site of the peptidyltransferase center. This is Large ribosomal subunit protein uL6 from Streptococcus sanguinis (strain SK36).